Here is a 505-residue protein sequence, read N- to C-terminus: UDP-N-acetylmuramate--L-alanine ligase (505 aa).

164 to 170 (GTHGKTT) is an ATP binding site.

The protein belongs to the MurCDEF family.

The protein localises to the cytoplasm. The enzyme catalyses UDP-N-acetyl-alpha-D-muramate + L-alanine + ATP = UDP-N-acetyl-alpha-D-muramoyl-L-alanine + ADP + phosphate + H(+). Its pathway is cell wall biogenesis; peptidoglycan biosynthesis. In terms of biological role, cell wall formation. This is UDP-N-acetylmuramate--L-alanine ligase from Synechocystis sp. (strain ATCC 27184 / PCC 6803 / Kazusa).